A 680-amino-acid polypeptide reads, in one-letter code: 1-deoxy-D-xylulose-5-phosphate synthase (680 aa).

Thiamine diphosphate-binding positions include His-113 and Gly-154–Ser-156. Asp-185 contributes to the Mg(2+) binding site. Thiamine diphosphate-binding positions include Gly-186–Ala-187, Asn-214, Phe-323, and Glu-408. Position 214 (Asn-214) interacts with Mg(2+).

The protein belongs to the transketolase family. DXPS subfamily. Homodimer. It depends on Mg(2+) as a cofactor. Thiamine diphosphate is required as a cofactor.

The enzyme catalyses D-glyceraldehyde 3-phosphate + pyruvate + H(+) = 1-deoxy-D-xylulose 5-phosphate + CO2. Its pathway is metabolic intermediate biosynthesis; 1-deoxy-D-xylulose 5-phosphate biosynthesis; 1-deoxy-D-xylulose 5-phosphate from D-glyceraldehyde 3-phosphate and pyruvate: step 1/1. Catalyzes the acyloin condensation reaction between C atoms 2 and 3 of pyruvate and glyceraldehyde 3-phosphate to yield 1-deoxy-D-xylulose-5-phosphate (DXP). The protein is 1-deoxy-D-xylulose-5-phosphate synthase of Psychrobacter arcticus (strain DSM 17307 / VKM B-2377 / 273-4).